The sequence spans 31 residues: Cyclotide mra3 (31 aa).

3 cysteine pairs are disulfide-bonded: Cys5-Cys21, Cys9-Cys23, and Cys14-Cys28.

Post-translationally, this is a cyclic peptide. In terms of processing, contains 3 disulfide bonds.

In terms of biological role, probably participates in a plant defense mechanism. The chain is Cyclotide mra3 from Melicytus ramiflorus (Whitey wood).